Consider the following 182-residue polypeptide: Helofensin-3 (182 aa).

The first 26 residues, 1 to 26 (MQMDWLFIAVISGIGLLSSGVPGTQG), serve as a signal peptide directing secretion. Residues 27-64 (AYTTEQCRALNGSCNFYACFPKNVIIGKCDWWGWSCCA) form a C(6)C(4)C(9)C(6)CC 1; approximate repeat. One copy of the C(6)C(4)C(9)C(6)CC 2; approximate repeat lies at 65–101 (RTPLERCTAKKGTCTKTGCTKTDTDHGPCDGGAQCCQ). A C(6)C(4)C(9)C(6)CC 3; approximate repeat occupies 102–138 (RDPVKYCKFHGNVCGRGKCPMDHIPIGECTPGYPCCK). One copy of the C(6)C(4)C(9)C(6)CC 4; approximate repeat lies at 139 to 176 (RDGPAYCKSKGGKCLNRCPQIVPTNVIGVCATGVPCCK).

It belongs to the beta-defensin family. Helofensin subfamily. In terms of tissue distribution, expressed by the mandibular venom gland.

Its subcellular location is the secreted. Its function is as follows. Lethal toxin which possesses an inhibitory effect on direct electrical stimulation of the isolated hemi-diaphragm of mice. Neither hemorrhagic nor hemolytic activities are detected. Phospholipase A2 activity, proteolytic activity and arginine esterolytic activity are absent. The polypeptide is Helofensin-3 (Heloderma suspectum cinctum (Banded Gila monster)).